Reading from the N-terminus, the 505-residue chain is Probable cytochrome P450 28a5 (505 aa).

Cysteine 450 lines the heme pocket.

This sequence belongs to the cytochrome P450 family. It depends on heme as a cofactor.

It localises to the endoplasmic reticulum membrane. The protein localises to the microsome membrane. May be involved in the metabolism of insect hormones and in the breakdown of synthetic insecticides. The polypeptide is Probable cytochrome P450 28a5 (Cyp28a5) (Drosophila melanogaster (Fruit fly)).